A 209-amino-acid polypeptide reads, in one-letter code: Thiamine-phosphate synthase (209 aa).

4-amino-2-methyl-5-(diphosphooxymethyl)pyrimidine is bound by residues 37-41 and asparagine 69; that span reads QLREK. Mg(2+) is bound by residues aspartate 70 and aspartate 89. Residue serine 108 participates in 4-amino-2-methyl-5-(diphosphooxymethyl)pyrimidine binding. Residue 134-136 coordinates 2-[(2R,5Z)-2-carboxy-4-methylthiazol-5(2H)-ylidene]ethyl phosphate; it reads TNT. Position 137 (lysine 137) interacts with 4-amino-2-methyl-5-(diphosphooxymethyl)pyrimidine. Residues glycine 164 and 184–185 contribute to the 2-[(2R,5Z)-2-carboxy-4-methylthiazol-5(2H)-ylidene]ethyl phosphate site; that span reads VS.

It belongs to the thiamine-phosphate synthase family. Requires Mg(2+) as cofactor.

The catalysed reaction is 2-[(2R,5Z)-2-carboxy-4-methylthiazol-5(2H)-ylidene]ethyl phosphate + 4-amino-2-methyl-5-(diphosphooxymethyl)pyrimidine + 2 H(+) = thiamine phosphate + CO2 + diphosphate. It catalyses the reaction 2-(2-carboxy-4-methylthiazol-5-yl)ethyl phosphate + 4-amino-2-methyl-5-(diphosphooxymethyl)pyrimidine + 2 H(+) = thiamine phosphate + CO2 + diphosphate. It carries out the reaction 4-methyl-5-(2-phosphooxyethyl)-thiazole + 4-amino-2-methyl-5-(diphosphooxymethyl)pyrimidine + H(+) = thiamine phosphate + diphosphate. It functions in the pathway cofactor biosynthesis; thiamine diphosphate biosynthesis; thiamine phosphate from 4-amino-2-methyl-5-diphosphomethylpyrimidine and 4-methyl-5-(2-phosphoethyl)-thiazole: step 1/1. Its function is as follows. Condenses 4-methyl-5-(beta-hydroxyethyl)thiazole monophosphate (THZ-P) and 2-methyl-4-amino-5-hydroxymethyl pyrimidine pyrophosphate (HMP-PP) to form thiamine monophosphate (TMP). This Methanobrevibacter smithii (strain ATCC 35061 / DSM 861 / OCM 144 / PS) protein is Thiamine-phosphate synthase.